A 140-amino-acid chain; its full sequence is Large ribosomal subunit protein uL11 (140 aa).

It belongs to the universal ribosomal protein uL11 family. In terms of assembly, part of the ribosomal stalk of the 50S ribosomal subunit. Interacts with L10 and the large rRNA to form the base of the stalk. L10 forms an elongated spine to which L12 dimers bind in a sequential fashion forming a multimeric L10(L12)X complex. One or more lysine residues are methylated.

Functionally, forms part of the ribosomal stalk which helps the ribosome interact with GTP-bound translation factors. The sequence is that of Large ribosomal subunit protein uL11 from Geotalea daltonii (strain DSM 22248 / JCM 15807 / FRC-32) (Geobacter daltonii).